Here is a 221-residue protein sequence, read N- to C-terminus: MSDENKQPHPMSQRFRGFLPVVVDVETAGFNPERDALLEIAAVMLTMDEDGWLRRGETHVQQIDPFEGANLEQSALDFTGIDPWNPEREAVPEREGLSEIFSPIRKAVKEHDCKRAVLVGHNATFDHNFVFAAALRADIKRNPFHPFSTFDTATLAGLAYGHTVLAQACKLAGIPFSNKEAHSAAYDAEKTADLFCGIVNRWRELGGFPPPPIEIAEEPQE.

The Exonuclease domain maps to 21-195; it reads VVVDVETAGF…YDAEKTADLF (175 aa). Residues D24, E26, H182, and D187 each contribute to the Mg(2+) site. The active-site Proton donor/acceptor is H182.

It belongs to the RNase T family. Homodimer. Mg(2+) serves as cofactor.

Functionally, trims short 3' overhangs of a variety of RNA species, leaving a one or two nucleotide 3' overhang. Responsible for the end-turnover of tRNA: specifically removes the terminal AMP residue from uncharged tRNA (tRNA-C-C-A). Also appears to be involved in tRNA biosynthesis. The chain is Ribonuclease T from Marinobacter nauticus (strain ATCC 700491 / DSM 11845 / VT8) (Marinobacter aquaeolei).